The chain runs to 1093 residues: Probable phosphorylase b kinase regulatory subunit beta (1093 aa).

The disordered stretch occupies residues 1-27 (MRDVPKSLGLSVTTPGGSSGAPDSGRH). Calmodulin-binding stretches follow at residues 6–27 (KSLGLSVTTPGGSSGAPDSGRH), 751–778 (QLYHRAGSLRYWRAVRYCSSLLHHIVDS), and 905–936 (EKLTTLQRRQLEGCLCRVPKHFYNKIWEILQR). A lipid anchor (S-farnesyl cysteine) is attached at Cys-1090.

Belongs to the phosphorylase b kinase regulatory chain family. In terms of processing, although the final Cys may be farnesylated, the terminal tripeptide is probably not removed, and the C-terminus is not methylated.

Its subcellular location is the cell membrane. Its pathway is glycan biosynthesis; glycogen metabolism. Its function is as follows. Phosphorylase b kinase catalyzes the phosphorylation of serine in certain substrates, including troponin I. The beta chain acts as a regulatory unit and modulates the activity of the holoenzyme in response to phosphorylation. In Drosophila melanogaster (Fruit fly), this protein is Probable phosphorylase b kinase regulatory subunit beta.